Reading from the N-terminus, the 130-residue chain is Small ribosomal subunit protein uS9 (130 aa).

It belongs to the universal ribosomal protein uS9 family.

The chain is Small ribosomal subunit protein uS9 from Yersinia enterocolitica serotype O:8 / biotype 1B (strain NCTC 13174 / 8081).